The following is a 455-amino-acid chain: Cysteinylglycine-S-conjugate dipeptidase (455 aa).

Zn(2+) is bound at residue H92. D94 is a catalytic residue. D125 serves as a coordination point for Zn(2+). Catalysis depends on E158, which acts as the Proton acceptor. Positions 159, 163, and 428 each coordinate Zn(2+).

It belongs to the peptidase M20F family. Zn(2+) serves as cofactor.

It catalyses the reaction an S-substituted L-cysteinylglycine + H2O = an S-substituted L-cysteine + glycine. The catalysed reaction is S-(1-hydroxy-3-methylhexan-3-yl)-L-cysteinylglycine + H2O = S-(1-hydroxy-3-methylhexan-3-yl)-L-cysteine + glycine. The enzyme catalyses S-benzyl-L-cysteinylglycine + H2O = S-benzyl-L-cysteine + glycine. Its function is as follows. Metallopeptidase that hydrolyzes the Cys-Gly bond of Cys-Gly-S-conjugates. Involved in the formation of the human body odorant 3-methyl-3-sulfanylhexan-1-ol (3M3SH) from odorless axilla secretions. Catalyzes the hydrolysis of the Cys-Gly bond of the Cys-Gly-S-conjugate of 3M3SH, a key precursor secreted by apocrine glands in human axilla skin. The Cys-S-conjugate obtained is then cleaved by the Cys-S-conjugate beta-lyase MetC, which finally releases 3M3SH. In Corynebacterium striatum, this protein is Cysteinylglycine-S-conjugate dipeptidase.